A 952-amino-acid chain; its full sequence is Lysosomal alpha-glucosidase (952 aa).

An N-terminal signal peptide occupies residues 1 to 27 (MRVRHPPCSRRLLAICALVSLATAALL). Positions 28 to 69 (GHILLHDFLLVPRELSGSSPVLEETHPAHQQGASRPGPRDAQ) are excised as a propeptide. Residues 47–80 (PVLEETHPAHQQGASRPGPRDAQAHLGRPRAVPT) are disordered. The region spanning 80 to 131 (TQCDVPPNSRFDCAPDKAITREQCDARGCCYIPAKQGLRGAQMGQPWCFFPP) is the P-type domain. 3 disulfides stabilise this stretch: C82–C109, C92–C108, and C103–C127. N-linked (GlcNAc...) asparagine glycans are attached at residues N140, N233, and N390. D404 serves as a coordination point for substrate. N-linked (GlcNAc...) asparagine glycosylation occurs at N470. The active-site Nucleophile is the D518. E521 is an active-site residue. C533 and C558 are oxidised to a cystine. Residues R600 and D616 each contribute to the substrate site. C647 and C658 form a disulfide bridge. N652 is a glycosylation site (N-linked (GlcNAc...) asparagine). Position 674 (H674) interacts with substrate. N882 and N925 each carry an N-linked (GlcNAc...) asparagine glycan.

It belongs to the glycosyl hydrolase 31 family.

The protein localises to the lysosome. Its subcellular location is the lysosome membrane. The enzyme catalyses Hydrolysis of terminal, non-reducing (1-&gt;4)-linked alpha-D-glucose residues with release of alpha-D-glucose.. In terms of biological role, essential for the degradation of glycogen in lysosomes. Has highest activity on alpha-1,4-linked glycosidic linkages, but can also hydrolyze alpha-1,6-linked glucans. This is Lysosomal alpha-glucosidase (GAA) from Pongo abelii (Sumatran orangutan).